A 753-amino-acid polypeptide reads, in one-letter code: MAP/microtubule affinity-regulating kinase 3 (753 aa).

Positions 1–36 (MSTRTPLPTVNERDTENHTSHGDGRQEVTSRTSRSG) are disordered. The segment covering 11–28 (NERDTENHTSHGDGRQEV) has biased composition (basic and acidic residues). The residue at position 42 (Ser-42) is a Phosphoserine. The 252-residue stretch at 56–307 (YRLLKTIGKG…LEQIMKDRWI (252 aa)) folds into the Protein kinase domain. Residues 62 to 70 (IGKGNFAKV) and Lys-85 each bind ATP. The active-site Proton acceptor is Asp-178. Thr-211 bears the Phosphothreonine; by LKB1 mark. One can recognise a UBA domain in the interval 326–365 (ISDQKRIDIMVGMGYSQEEIQESLSKMKYDEITATYLLLG). Ser-368, Ser-374, Ser-376, Ser-380, Ser-383, Leu-384, Ser-400, Arg-407, Ser-419, and Ser-469 each carry phosphoserine. The interval 370–600 (ELDASDSSSS…TPLSQTRSRG (231 aa)) is disordered. The span at 374-385 (SDSSSSSNLSLA) shows a compositional bias: low complexity. A compositionally biased stretch (polar residues) spans 391–400 (SDLNNSTGQS). Polar residues-rich tracts occupy residues 490–513 (STVP…CSER) and 521–548 (VIQN…SSAA). Ser-540 and Ser-543 each carry phosphoserine. A Phosphothreonine modification is found at Thr-549. Thr-564 carries the phosphothreonine; by PKC/PRKCZ modification. Ser-583, Ser-598, Ser-601, and Ser-643 each carry phosphoserine. The segment covering 584–600 (PSLSHEATPLSQTRSRG) has biased composition (polar residues). Residues 632–655 (NGRYEGSSRNVSAEQKDENKEAKP) form a disordered region. Basic and acidic residues predominate over residues 645 to 655 (EQKDENKEAKP). Residues 704-753 (DGHAENLVQWEMEVCKLPRLSLNGVRFKRISGTSIAFKNIASKIANELKL) enclose the KA1 domain.

Belongs to the protein kinase superfamily. CAMK Ser/Thr protein kinase family. SNF1 subfamily. In terms of assembly, interacts with MAPT/TAU. Interacts with DLG5 (via coiled-coil domain). Interacts with STK3/MST2 and STK4/MST1 in the presence of DLG5. Interacts with YWHAB, YWHAG, YWHAQ and YWHAZ. Interacts with PKP2 (via N-terminus). Interacts with CDC25C. Interacts with KSR1. In terms of processing, phosphorylated at Thr-211 by STK11/LKB1 in complex with STE20-related adapter-alpha (STRADA) pseudo kinase and CAB39. Phosphorylation at Thr-564 by PRKCZ/aPKC inhibits the kinase activity. As to expression, ubiquitous.

Its subcellular location is the cell membrane. It localises to the cell projection. It is found in the dendrite. The protein resides in the cytoplasm. It carries out the reaction L-seryl-[protein] + ATP = O-phospho-L-seryl-[protein] + ADP + H(+). The catalysed reaction is L-threonyl-[protein] + ATP = O-phospho-L-threonyl-[protein] + ADP + H(+). Activated by phosphorylation on Thr-211. Inhibited by phosphorylation on Thr-564. In terms of biological role, serine/threonine-protein kinase. Involved in the specific phosphorylation of microtubule-associated proteins for MAP2 and MAP4. Phosphorylates the microtubule-associated protein MAPT/TAU. Phosphorylates CDC25C on 'Ser-216'. Regulates localization and activity of some histone deacetylases by mediating phosphorylation of HDAC7, promoting subsequent interaction between HDAC7 and 14-3-3 and export from the nucleus. Regulates localization and activity of MITF by mediating its phosphorylation, promoting subsequent interaction between MITF and 14-3-3 and retention in the cytosol. Negatively regulates the Hippo signaling pathway and antagonizes the phosphorylation of LATS1. Cooperates with DLG5 to inhibit the kinase activity of STK3/MST2 toward LATS1. Phosphorylates PKP2 and KSR1. The chain is MAP/microtubule affinity-regulating kinase 3 (MARK3) from Homo sapiens (Human).